We begin with the raw amino-acid sequence, 396 residues long: Microcin B17-processing protein McbD (396 aa).

The region spanning 41-396 is the YcaO domain; the sequence is ASAAGETLKS…VRESKMVPFP (356 aa).

The protein localises to the cytoplasm. In terms of biological role, necessary to process the inactive microcin B17 (McbA) precursor into the active peptide. The chain is Microcin B17-processing protein McbD (mcbD) from Escherichia coli.